The primary structure comprises 366 residues: ATPase ASNA1 homolog (366 aa).

33-40 (KGGVGKTT) is an ATP binding site. The active site involves D62. The ATP site is built by E234 and N261.

This sequence belongs to the arsA ATPase family. Homodimer.

It localises to the cytoplasm. The protein resides in the endoplasmic reticulum. In terms of biological role, ATPase required for the post-translational delivery of tail-anchored (TA) proteins to the endoplasmic reticulum. Recognizes and selectively binds the transmembrane domain of TA proteins in the cytosol. This complex then targets to the endoplasmic reticulum by membrane-bound receptors, where the tail-anchored protein is released for insertion. This process is regulated by ATP binding and hydrolysis. ATP binding drives the homodimer towards the closed dimer state, facilitating recognition of newly synthesized TA membrane proteins. ATP hydrolysis is required for insertion. Subsequently, the homodimer reverts towards the open dimer state, lowering its affinity for the membrane-bound receptor, and returning it to the cytosol to initiate a new round of targeting. The sequence is that of ATPase ASNA1 homolog from Cryptosporidium parvum (strain Iowa II).